A 336-amino-acid polypeptide reads, in one-letter code: P2Y purinoceptor 13 (336 aa).

Topologically, residues 1-32 are extracellular; that stretch reads MLGTVNTTGMQGFNKSERCPRDTRMTQLLFPV. 2 N-linked (GlcNAc...) asparagine glycosylation sites follow: Asn-6 and Asn-14. The chain crosses the membrane as a helical span at residues 33-53; the sequence is LYTVVFFTGVLLNTLALWVFI. Residues 54 to 60 lie on the Cytoplasmic side of the membrane; that stretch reads HIPSNST. Residues 61-81 form a helical membrane-spanning segment; sequence FIIYLKNTLVADLIMTLMLPF. Residues 82 to 100 are Extracellular-facing; that stretch reads KILSDSRLAPWQLRGFVCT. Residues Cys-99 and Cys-176 are joined by a disulfide bond. A helical membrane pass occupies residues 101–121; sequence FSSVVFYETMYVGIMMLGLIA. Over 122 to 144 the chain is Cytoplasmic; that stretch reads FDRFLKIVVPFRKTFVKKTAFAK. A helical transmembrane segment spans residues 145–165; the sequence is IVSISIWLLMFLISLPNMILN. Over 166-193 the chain is Extracellular; sequence KEATASTVKKCASLKSPLGLLWHQVVSH. The helical transmembrane segment at 194-214 threads the bilayer; it reads TCQFIFWTVFILMLLFYTVIA. Over 215–237 the chain is Cytoplasmic; sequence KKVYDSYRKFKSRDSKHKRLEAK. A helical membrane pass occupies residues 238–258; sequence VFIVMAVFFVCFAPFHFVRVP. Over 259–281 the chain is Extracellular; sequence YTHSQTTNKTDCRLENQLFLAKE. N-linked (GlcNAc...) asparagine glycosylation occurs at Asn-266. The helical transmembrane segment at 282–302 threads the bilayer; the sequence is STLFLATTNICMDPLIYIILC. At 303 to 336 the chain is on the cytoplasmic side; it reads KKFTRKVPCMRWRTKTAASSDEHHSSQTDNITLS.

The protein belongs to the G-protein coupled receptor 1 family. Highest levels in spleen, liver brain and kidney. Lower but significant level are also detected in intestine, stomach, skeletal muscle, testis, heart and lung.

It is found in the cell membrane. In terms of biological role, receptor for ADP. Coupled to G(i)-proteins. May play a role in hematopoiesis and the immune system. The sequence is that of P2Y purinoceptor 13 (P2ry13) from Rattus norvegicus (Rat).